We begin with the raw amino-acid sequence, 49 residues long: Large ribosomal subunit protein bL33B (49 aa).

It belongs to the bacterial ribosomal protein bL33 family.

The polypeptide is Large ribosomal subunit protein bL33B (Oceanobacillus iheyensis (strain DSM 14371 / CIP 107618 / JCM 11309 / KCTC 3954 / HTE831)).